The sequence spans 870 residues: Leucine--tRNA ligase (870 aa).

A 'HIGH' region motif is present at residues 36-46 (PYPSGKIHLGH). The 'KMSKS' region motif lies at 602–606 (KMSKS). Residue lysine 605 coordinates ATP.

This sequence belongs to the class-I aminoacyl-tRNA synthetase family.

The protein resides in the cytoplasm. It catalyses the reaction tRNA(Leu) + L-leucine + ATP = L-leucyl-tRNA(Leu) + AMP + diphosphate. The sequence is that of Leucine--tRNA ligase from Rickettsia akari (strain Hartford).